The primary structure comprises 141 residues: Transcriptional regulator MraZ (141 aa).

SpoVT-AbrB domains are found at residues 5-47 (TFNL…KPAD) and 76-119 (ANLV…DKVQ).

The protein belongs to the MraZ family. In terms of assembly, forms oligomers.

It localises to the cytoplasm. The protein localises to the nucleoid. This Mycoplasma genitalium (strain ATCC 33530 / DSM 19775 / NCTC 10195 / G37) (Mycoplasmoides genitalium) protein is Transcriptional regulator MraZ.